We begin with the raw amino-acid sequence, 136 residues long: Large-conductance mechanosensitive channel (136 aa).

4 helical membrane-spanning segments follow: residues 9-29 (AFASRGNVIDMAVGIIIGAAF), 32-52 (IVSSFVADIIMPPIGIILGGV), 54-74 (FSDLSFVLLAAQGDAPAVVIA), and 79-99 (IQTVVDFTIIAFAIFMGLKAI).

It belongs to the MscL family. Homopentamer.

Its subcellular location is the cell inner membrane. Its function is as follows. Channel that opens in response to stretch forces in the membrane lipid bilayer. May participate in the regulation of osmotic pressure changes within the cell. The protein is Large-conductance mechanosensitive channel of Vibrio cholerae serotype O1 (strain ATCC 39541 / Classical Ogawa 395 / O395).